The primary structure comprises 401 residues: Formate-dependent phosphoribosylglycinamide formyltransferase (401 aa).

Residues 22–23 (EL) and Glu-82 each bind N(1)-(5-phospho-beta-D-ribosyl)glycinamide. ATP contacts are provided by residues Arg-115, Lys-157, 162–167 (SSGKGQ), 197–200 (EGFI), and Glu-205. In terms of domain architecture, ATP-grasp spans 120–315 (RLAAESLGLP…EFELHARAIL (196 aa)). Glu-274 and Glu-286 together coordinate Mg(2+). N(1)-(5-phospho-beta-D-ribosyl)glycinamide contacts are provided by residues Asp-293, Lys-362, and 369–370 (RR).

This sequence belongs to the PurK/PurT family. As to quaternary structure, homodimer.

The catalysed reaction is N(1)-(5-phospho-beta-D-ribosyl)glycinamide + formate + ATP = N(2)-formyl-N(1)-(5-phospho-beta-D-ribosyl)glycinamide + ADP + phosphate + H(+). It participates in purine metabolism; IMP biosynthesis via de novo pathway; N(2)-formyl-N(1)-(5-phospho-D-ribosyl)glycinamide from N(1)-(5-phospho-D-ribosyl)glycinamide (formate route): step 1/1. Involved in the de novo purine biosynthesis. Catalyzes the transfer of formate to 5-phospho-ribosyl-glycinamide (GAR), producing 5-phospho-ribosyl-N-formylglycinamide (FGAR). Formate is provided by PurU via hydrolysis of 10-formyl-tetrahydrofolate. The sequence is that of Formate-dependent phosphoribosylglycinamide formyltransferase from Cupriavidus taiwanensis (strain DSM 17343 / BCRC 17206 / CCUG 44338 / CIP 107171 / LMG 19424 / R1) (Ralstonia taiwanensis (strain LMG 19424)).